Reading from the N-terminus, the 527-residue chain is Bifunctional purine biosynthesis protein PurH (527 aa).

The region spanning 1–149 is the MGS-like domain; that stretch reads MASDFLPVRR…KNFARVAVAA (149 aa).

It belongs to the PurH family.

It carries out the reaction (6R)-10-formyltetrahydrofolate + 5-amino-1-(5-phospho-beta-D-ribosyl)imidazole-4-carboxamide = 5-formamido-1-(5-phospho-D-ribosyl)imidazole-4-carboxamide + (6S)-5,6,7,8-tetrahydrofolate. The catalysed reaction is IMP + H2O = 5-formamido-1-(5-phospho-D-ribosyl)imidazole-4-carboxamide. It functions in the pathway purine metabolism; IMP biosynthesis via de novo pathway; 5-formamido-1-(5-phospho-D-ribosyl)imidazole-4-carboxamide from 5-amino-1-(5-phospho-D-ribosyl)imidazole-4-carboxamide (10-formyl THF route): step 1/1. It participates in purine metabolism; IMP biosynthesis via de novo pathway; IMP from 5-formamido-1-(5-phospho-D-ribosyl)imidazole-4-carboxamide: step 1/1. This Xanthomonas axonopodis pv. citri (strain 306) protein is Bifunctional purine biosynthesis protein PurH.